The sequence spans 93 residues: Non-histone chromosomal protein 6A (93 aa).

Disordered stretches follow at residues 1–23 (MVTPREPKKRTTRKKKDPNAPKR) and 69–93 (PYEAKAQADKKRYESEKELYNATLA). A compositionally biased stretch (basic residues) spans 7-16 (PKKRTTRKKK). The segment at residues 21–89 (PKRALSAYMF…RYESEKELYN (69 aa)) is a DNA-binding region (HMG box). The segment covering 69 to 87 (PYEAKAQADKKRYESEKEL) has biased composition (basic and acidic residues).

It belongs to the NHP6 family. In terms of assembly, weakly associates with the stable SPT16-POB3 heterodimer to form the FACT (yFACT or SNP) complex, which is associated with nucleosomes. Multiple molecules of NHP6 (NHP6A and/or NHP6B) are required to recruit the SPT16-POB3 heterodimer to DNA.

It is found in the nucleus. The protein resides in the chromosome. DNA-binding protein that induces severe bending of DNA. Required for DNA-binding by the FACT complex, a general chromatin factor that acts to reorganize nucleosomes. The FACT complex is involved in multiple processes that require DNA as a template such as mRNA elongation, DNA replication and DNA repair. Also augments the fidelity of transcription by RNA polymerase III independently of any role in the FACT complex. Required for transcriptional initiation fidelity of some but not all tRNA genes. Seems to be functionally redundant with NHP6B. The sequence is that of Non-histone chromosomal protein 6A (NHP6A) from Saccharomyces cerevisiae (strain ATCC 204508 / S288c) (Baker's yeast).